Here is a 63-residue protein sequence, read N- to C-terminus: Small ribosomal subunit protein bS21 (63 aa).

It belongs to the bacterial ribosomal protein bS21 family.

The protein is Small ribosomal subunit protein bS21 of Phocaeicola vulgatus (strain ATCC 8482 / DSM 1447 / JCM 5826 / CCUG 4940 / NBRC 14291 / NCTC 11154) (Bacteroides vulgatus).